The following is a 612-amino-acid chain: Lipoma-preferred partner (612 aa).

2 disordered regions span residues 1 to 118 (MSHP…SSLD) and 132 to 219 (ECSS…SSRP). Residues 26–40 (THSFGNPSISVSTQQ) show a composition bias toward polar residues. Residues 41–53 (PPKKFAPVVAPKP) are compositionally biased toward low complexity. K108 carries the post-translational modification N6-acetyllysine. S116 and S151 each carry phosphoserine. Polar residues-rich tracts occupy residues 143 to 158 (QSST…STPV) and 171 to 181 (PLTATKKSTLK). Over residues 183–193 (QPAPQAGPIPV) the composition is skewed to pro residues. Positions 209–219 (SYTTASTSSRP) are enriched in polar residues. A phosphotyrosine mark is found at Y244 and Y301. The tract at residues 307-387 (YGGRNDSDPT…LGPSSVAPSF (81 aa)) is disordered. Residues 314–323 (DPTYGQQGHP) show a composition bias toward polar residues. A Glycyl lysine isopeptide (Lys-Gly) (interchain with G-Cter in SUMO1) cross-link involves residue K327. Residue T333 is modified to Phosphothreonine. Residue S375 is modified to Phosphoserine. LIM zinc-binding domains are found at residues 414 to 473 (GRCA…INTL), 474 to 534 (EQCN…KFAP), and 535 to 603 (RCSV…RIRV).

It belongs to the zyxin/ajuba family. Interacts with VASP, with PDZ domains of SCRIB and with ACTN1/alpha-actinin. In terms of tissue distribution, expressed in a wide variety of tissues but no or very low expression in brain and peripheral leukocytes.

The protein localises to the nucleus. Its subcellular location is the cytoplasm. It is found in the cell junction. The protein resides in the cell membrane. Functionally, may play a structural role at sites of cell adhesion in maintaining cell shape and motility. In addition to these structural functions, it may also be implicated in signaling events and activation of gene transcription. May be involved in signal transduction from cell adhesion sites to the nucleus allowing successful integration of signals arising from soluble factors and cell-cell adhesion sites. Also suggested to serve as a scaffold protein upon which distinct protein complexes are assembled in the cytoplasm and in the nucleus. This Homo sapiens (Human) protein is Lipoma-preferred partner (LPP).